The primary structure comprises 293 residues: Protease HtpX (293 aa).

Transmembrane regions (helical) follow at residues 4-24 and 34-54; these read IALF…VLSL and GLMI…LLMS. His-139 serves as a coordination point for Zn(2+). Residue Glu-140 is part of the active site. Zn(2+) is bound at residue His-143. The next 2 helical transmembrane spans lie at 158-178 and 193-213; these read VVNT…AGFM and LIYF…ASII. Glu-222 is a Zn(2+) binding site.

The protein belongs to the peptidase M48B family. Zn(2+) serves as cofactor.

Its subcellular location is the cell inner membrane. This is Protease HtpX from Escherichia coli (strain ATCC 8739 / DSM 1576 / NBRC 3972 / NCIMB 8545 / WDCM 00012 / Crooks).